Consider the following 250-residue polypeptide: Adenosine 5'-phosphosulfate reductase (250 aa).

[4Fe-4S] cluster-binding residues include Cys-119, Cys-120, Cys-202, and Cys-205. Cys-230 serves as the catalytic Nucleophile; cysteine thiosulfonate intermediate.

The protein belongs to the PAPS reductase family. CysH subfamily. The cofactor is [4Fe-4S] cluster.

The protein localises to the cytoplasm. It carries out the reaction [thioredoxin]-disulfide + sulfite + AMP + 2 H(+) = adenosine 5'-phosphosulfate + [thioredoxin]-dithiol. Its pathway is sulfur metabolism; hydrogen sulfide biosynthesis; sulfite from sulfate. In terms of biological role, catalyzes the formation of sulfite from adenosine 5'-phosphosulfate (APS) using thioredoxin as an electron donor. The protein is Adenosine 5'-phosphosulfate reductase of Burkholderia cepacia (Pseudomonas cepacia).